The sequence spans 127 residues: PRA1 family protein C (127 aa).

3 consecutive transmembrane segments (helical) span residues 15 to 35, 53 to 73, and 76 to 96; these read IFISMLWQPVHLSVFVILIVA, VIDDSTLVLVLLVLTIGIFLL, and VSRGIVIGVLAGLPVVLVHGM.

It belongs to the PRA1 family.

It is found in the endoplasmic reticulum membrane. Its function is as follows. May be involved in both secretory and endocytic intracellular trafficking in the endosomal/prevacuolar compartments. The sequence is that of PRA1 family protein C (PRA1C) from Arabidopsis thaliana (Mouse-ear cress).